We begin with the raw amino-acid sequence, 165 residues long: S-(2-succino)cysteine N-acetyltransferase (165 aa).

An N-acetyltransferase domain is found at 3-162 (PRYRLAVERD…ITVYMKKQLR (160 aa)).

Belongs to the acetyltransferase family.

The catalysed reaction is S-(2-succino)-L-cysteine + acetyl-CoA = N-acetyl-S-(2-succino)-L-cysteine + CoA + H(+). It participates in amino-acid biosynthesis; L-cysteine biosynthesis. Its function is as follows. Catalyzes the N-acetylation of S-(2-succino)cysteine. Is involved in a S-(2-succino)cysteine (2SC) degradation pathway that allows B.subtilis to grow on 2SC as a sole sulfur source, via its metabolization to cysteine. Moreover, 2SC is a toxic compound in B.subtilis at high exogenous concentrations, and this enzyme relieves 2SC toxicity via N-acetylation. The sequence is that of S-(2-succino)cysteine N-acetyltransferase from Bacillus subtilis (strain 168).